The primary structure comprises 227 residues: Isopentenyl-diphosphate Delta-isomerase 1 (227 aa).

A substrate-binding site is contributed by lysine 36. Histidine 40 and histidine 51 together coordinate Mg(2+). In terms of domain architecture, Nudix hydrolase spans leucine 49–isoleucine 199. Residues arginine 70 and lysine 74 each coordinate substrate. Residue cysteine 86 is part of the active site. Residue serine 87 coordinates substrate. The Mg(2+) site is built by glutamate 146 and glutamate 148. Glutamate 148 is an active-site residue. Lysine 176 carries the N6-acetyllysine modification. The Microbody targeting signal signature appears at tyrosine 225–methionine 227.

The protein belongs to the IPP isomerase type 1 family. In terms of assembly, monomer. Requires Mg(2+) as cofactor.

The protein localises to the peroxisome. It carries out the reaction isopentenyl diphosphate = dimethylallyl diphosphate. It participates in isoprenoid biosynthesis; dimethylallyl diphosphate biosynthesis; dimethylallyl diphosphate from isopentenyl diphosphate: step 1/1. Functionally, catalyzes the 1,3-allylic rearrangement of the homoallylic substrate isopentenyl (IPP) to its highly electrophilic allylic isomer, dimethylallyl diphosphate (DMAPP). This chain is Isopentenyl-diphosphate Delta-isomerase 1 (IDI1), found in Homo sapiens (Human).